The following is a 264-amino-acid chain: Teichoic acids export ATP-binding protein TagH (264 aa).

One can recognise an ABC transporter domain in the interval 24-243 (IKDALIPKNK…YEAFLKTFKK (220 aa)). 57–64 (GINGSGKS) contributes to the ATP binding site.

This sequence belongs to the ABC transporter superfamily. Teichoic acids exporter (TC 3.A.1.104.1) family. In terms of assembly, the complex is composed of two ATP-binding proteins (TagH) and two transmembrane proteins (TagG).

It is found in the cell membrane. It catalyses the reaction ATP + H2O + teichoic acidSide 1 = ADP + phosphate + teichoic acidSide 2.. In terms of biological role, part of the ABC transporter complex TagGH involved in teichoic acids export. Responsible for energy coupling to the transport system. The protein is Teichoic acids export ATP-binding protein TagH of Staphylococcus epidermidis (strain ATCC 35984 / DSM 28319 / BCRC 17069 / CCUG 31568 / BM 3577 / RP62A).